The chain runs to 127 residues: Fluoride-specific ion channel FluC (127 aa).

4 consecutive transmembrane segments (helical) span residues 4 to 24 (LLLA…LLSM), 35 to 55 (LGTL…FAWF), 71 to 91 (TGFC…VFLL), and 103 to 123 (VFVN…LFSA). Residues glycine 75 and threonine 78 each coordinate Na(+).

It belongs to the fluoride channel Fluc/FEX (TC 1.A.43) family.

Its subcellular location is the cell inner membrane. The catalysed reaction is fluoride(in) = fluoride(out). Its activity is regulated as follows. Na(+) is not transported, but it plays an essential structural role and its presence is essential for fluoride channel function. Its function is as follows. Fluoride-specific ion channel. Important for reducing fluoride concentration in the cell, thus reducing its toxicity. This chain is Fluoride-specific ion channel FluC, found in Escherichia coli O8 (strain IAI1).